A 232-amino-acid polypeptide reads, in one-letter code: Endonuclease NucS (232 aa).

This sequence belongs to the NucS endonuclease family.

Its subcellular location is the cytoplasm. Its function is as follows. Cleaves both 3' and 5' ssDNA extremities of branched DNA structures. This is Endonuclease NucS from Mycobacteroides abscessus (strain ATCC 19977 / DSM 44196 / CCUG 20993 / CIP 104536 / JCM 13569 / NCTC 13031 / TMC 1543 / L948) (Mycobacterium abscessus).